Reading from the N-terminus, the 712-residue chain is Lactoperoxidase (712 aa).

A signal peptide spans 1 to 22 (MWVCLQLPVFLASVTLFEVAAS). Positions 23–100 (DTIAQAASTT…WEESLKRLRR (78 aa)) are excised as a propeptide. Asparagine 106 carries N-linked (GlcNAc...) asparagine glycosylation. Intrachain disulfides connect cysteine 123/cysteine 284, cysteine 132/cysteine 145, cysteine 246/cysteine 256, and cysteine 250/cysteine 274. Asparagine 212 carries N-linked (GlcNAc...) asparagine glycosylation. Aspartate 225 contributes to the heme b binding site. Residue histidine 226 is the Proton acceptor of the active site. Aspartate 227 provides a ligand contact to Ca(2+). Ca(2+) contacts are provided by threonine 301, phenylalanine 303, aspartate 305, and serine 307. Serine 315 is subject to Phosphoserine. N-linked (GlcNAc...) asparagine glycosylation is found at asparagine 322 and asparagine 358. A disulfide bridge connects residues cysteine 354 and cysteine 365. Glutamate 375 is a heme b binding site. Asparagine 449 carries N-linked (GlcNAc...) asparagine glycosylation. Position 468 (histidine 468) interacts with heme b. 3'-nitrotyrosine is present on tyrosine 482. Intrachain disulfides connect cysteine 573/cysteine 630 and cysteine 671/cysteine 696.

This sequence belongs to the peroxidase family. XPO subfamily. Ca(2+) is required as a cofactor. The cofactor is heme b. In terms of tissue distribution, mammary gland; milk.

It localises to the secreted. It is found in the cytoplasm. It carries out the reaction 2 a phenolic donor + H2O2 = 2 a phenolic radical donor + 2 H2O. The enzyme catalyses thiocyanate + H2O2 + H(+) = hypothiocyanous acid + H2O. It catalyses the reaction iodide + H2O2 = hypoiodite + H2O. Its function is as follows. Heme-containing oxidoreductase which catalyzes the conversion of thiocyanate (SCN(-)) into antimicrobial agent hypothiocyanous acid (OSCN(-)) in the presence of hydrogen peroxide (H2O2). Also involved in the conversion of iodide (I(-)) into hypoiodite (IO(-)) in the presence of H2O2. Responsible for the inactivation of a wide range of micro-organisms and hence, important component of defense mechanism. The lactoperoxidase-SCN(-)-H2O2 system shows antibacterial properties against some streptococci strains. The lactoperoxidase-I(-)-H2O2 system shows antibacterial properties against E.coli. May protect the udder from infection and may promote growth in newborns. May be implicated in airway host defense against infection. May contribute to maintaining an appropriate H2O2 cellular level, therefore protecting cells from H2O2-caused injuries and inflammation. This Bos taurus (Bovine) protein is Lactoperoxidase (LPO).